A 234-amino-acid chain; its full sequence is Thrombin-like enzyme acutin (234 aa).

A propeptide is located at residue methionine 1. The Peptidase S1 domain occupies 2-225; the sequence is VIGGDECDIN…YTDWIQRNIA (224 aa). Disulfide bonds link cysteine 8–cysteine 140, cysteine 27–cysteine 43, cysteine 75–cysteine 232, cysteine 119–cysteine 186, cysteine 151–cysteine 165, and cysteine 176–cysteine 201. Residue asparagine 21 is glycosylated (N-linked (GlcNAc...) asparagine). Residues histidine 42 and aspartate 87 each act as charge relay system in the active site. The active-site Charge relay system is the serine 180.

The protein belongs to the peptidase S1 family. Snake venom subfamily. In terms of assembly, monomer. As to expression, expressed by the venom gland.

The protein resides in the secreted. In terms of biological role, thrombin-like snake venom serine protease. Has arginyl esterase and fibrinogen clotting activities. This is Thrombin-like enzyme acutin from Deinagkistrodon acutus (Hundred-pace snake).